The chain runs to 141 residues: Large ribosomal subunit protein uL11 (141 aa).

It belongs to the universal ribosomal protein uL11 family. As to quaternary structure, part of the ribosomal stalk of the 50S ribosomal subunit. Interacts with L10 and the large rRNA to form the base of the stalk. L10 forms an elongated spine to which L12 dimers bind in a sequential fashion forming a multimeric L10(L12)X complex. One or more lysine residues are methylated.

Its function is as follows. Forms part of the ribosomal stalk which helps the ribosome interact with GTP-bound translation factors. This chain is Large ribosomal subunit protein uL11, found in Picosynechococcus sp. (strain ATCC 27264 / PCC 7002 / PR-6) (Agmenellum quadruplicatum).